The sequence spans 306 residues: Pantothenate kinase (306 aa).

90–97 contributes to the ATP binding site; sequence GSVAVGKS.

Belongs to the prokaryotic pantothenate kinase family.

The protein resides in the cytoplasm. The enzyme catalyses (R)-pantothenate + ATP = (R)-4'-phosphopantothenate + ADP + H(+). The protein operates within cofactor biosynthesis; coenzyme A biosynthesis; CoA from (R)-pantothenate: step 1/5. The protein is Pantothenate kinase of Lactococcus lactis subsp. cremoris (strain MG1363).